The chain runs to 383 residues: Delta(12) acyl-lipid conjugase (11E,13E-forming) (383 aa).

The interval 1-30 (MGEVGPTNRTKTKLDKQQESENRVPHEPPP) is disordered. Residues 12 to 26 (TKLDKQQESENRVPH) are compositionally biased toward basic and acidic residues. 2 helical membrane passes run 56 to 76 (VIHD…YIPM) and 84 to 104 (VAWP…LVLG). The short motif at 105 to 109 (HECGH) is the Histidine box-1 element. The short motif at 141 to 145 (HRRHH) is the Histidine box-2 element. A run of 3 helical transmembrane segments spans residues 179–199 (FLMI…FNAN), 225–245 (VIAS…IALA), and 249–269 (VWLI…IVLI). Residues 315–319 (HLVHH) carry the Histidine box-3 motif.

This sequence belongs to the fatty acid desaturase type 1 family. As to expression, expressed in developing seeds, but not in leaves.

It is found in the membrane. It catalyses the reaction a (9Z,12Z)-octadecadienoyl-containing glycerolipid + 2 Fe(II)-[cytochrome b5] + O2 + 2 H(+) = a (9Z,11E,13E)-octadecatrienoyl-containing glycerolipid + 2 Fe(III)-[cytochrome b5] + 2 H2O. The enzyme catalyses (9Z,12Z,15Z)-octadecatrienoyl-containing glycerolipid + 2 Fe(II)-[cytochrome b5] + O2 + 2 H(+) = a (9Z,11E,13E,15Z)-octadecatetraenoyl-containing glycerolipid + 2 Fe(III)-[cytochrome b5] + 2 H2O. Its pathway is lipid metabolism; polyunsaturated fatty acid biosynthesis. Its function is as follows. Converts linoleic acid to alpha-eleostearic acid (18:3(9Z,11E,13E)) and alpha-linolenic acid to alpha-parinaric acid (18:4(9Z,11E, 13E, 15Z)). Converts a single cis double bond at carbon 12 to two conjugated trans bonds at positions 11 and 13. The protein is Delta(12) acyl-lipid conjugase (11E,13E-forming) of Impatiens balsamina (Balsam).